Reading from the N-terminus, the 236-residue chain is 15,16-dihydrobiliverdin:ferredoxin oxidoreductase (236 aa).

This sequence belongs to the HY2 family.

It catalyses the reaction 15,16-dihydrobiliverdin + oxidized 2[4Fe-4S]-[ferredoxin] = biliverdin IXalpha + reduced 2[4Fe-4S]-[ferredoxin] + 2 H(+). Functionally, catalyzes the two-electron reduction of biliverdin IX-alpha at the C15 methine bridge. This Prochlorococcus marinus (strain MIT 9215) protein is 15,16-dihydrobiliverdin:ferredoxin oxidoreductase.